Reading from the N-terminus, the 160-residue chain is Cyclic pyranopterin monophosphate synthase (160 aa).

Substrate-binding positions include 77–79 and 115–116; these read LCH and ME. D130 is an active-site residue.

It belongs to the MoaC family. In terms of assembly, homohexamer; trimer of dimers.

The enzyme catalyses (8S)-3',8-cyclo-7,8-dihydroguanosine 5'-triphosphate = cyclic pyranopterin phosphate + diphosphate. It functions in the pathway cofactor biosynthesis; molybdopterin biosynthesis. In terms of biological role, catalyzes the conversion of (8S)-3',8-cyclo-7,8-dihydroguanosine 5'-triphosphate to cyclic pyranopterin monophosphate (cPMP). The polypeptide is Cyclic pyranopterin monophosphate synthase (Parvibaculum lavamentivorans (strain DS-1 / DSM 13023 / NCIMB 13966)).